Consider the following 161-residue polypeptide: Regulator of ribonuclease activity A (161 aa).

This sequence belongs to the RraA family. Homotrimer. Binds to both RNA-binding sites in the C-terminal region of Rne and to RhlB.

It is found in the cytoplasm. In terms of biological role, globally modulates RNA abundance by binding to RNase E (Rne) and regulating its endonucleolytic activity. Can modulate Rne action in a substrate-dependent manner by altering the composition of the degradosome. Modulates RNA-binding and helicase activities of the degradosome. The polypeptide is Regulator of ribonuclease activity A (Citrobacter koseri (strain ATCC BAA-895 / CDC 4225-83 / SGSC4696)).